Consider the following 247-residue polypeptide: Triosephosphate isomerase (247 aa).

Asn10 and Lys12 together coordinate substrate. Residue His94 is the Electrophile of the active site. The Proton acceptor role is filled by Glu164.

This sequence belongs to the triosephosphate isomerase family. In terms of assembly, homodimer.

It localises to the cytoplasm. It carries out the reaction D-glyceraldehyde 3-phosphate = dihydroxyacetone phosphate. It catalyses the reaction dihydroxyacetone phosphate = methylglyoxal + phosphate. Its pathway is carbohydrate biosynthesis; gluconeogenesis. It functions in the pathway carbohydrate degradation; glycolysis; D-glyceraldehyde 3-phosphate from glycerone phosphate: step 1/1. Triosephosphate isomerase is an extremely efficient metabolic enzyme that catalyzes the interconversion between dihydroxyacetone phosphate (DHAP) and D-glyceraldehyde-3-phosphate (G3P) in glycolysis and gluconeogenesis. Its function is as follows. It is also responsible for the non-negligible production of methylglyoxal a reactive cytotoxic side-product that modifies and can alter proteins, DNA and lipids. This chain is Triosephosphate isomerase (tpi-1), found in Caenorhabditis elegans.